A 32-amino-acid chain; its full sequence is MSDIN-like toxin proprotein 3 (32 aa).

A propeptide spanning residues 1–10 is cleaved from the precursor; sequence MSDINATRLP. A cross-link (cyclopeptide (Ser-Pro)) is located at residues 11–17; it reads SFFFPIP. A propeptide spanning residues 18–32 is cleaved from the precursor; sequence CISDDIEMVLTRGER.

It belongs to the MSDIN fungal toxin family. Processed by the macrocyclase-peptidase enzyme POPB to yield a toxic cyclic heptapeptide. POPB first removes 10 residues from the N-terminus. Conformational trapping of the remaining peptide forces the enzyme to release this intermediate rather than proceed to macrocyclization. The enzyme rebinds the remaining peptide in a different conformation and catalyzes macrocyclization of the N-terminal 8 residues.

Probable toxin that belongs to the MSDIN-like toxin family responsible for a large number of food poisoning cases and deaths. The protein is MSDIN-like toxin proprotein 3 of Amanita phalloides (Death cap).